Here is a 114-residue protein sequence, read N- to C-terminus: Large ribosomal subunit protein bL17 (114 aa).

The protein belongs to the bacterial ribosomal protein bL17 family. Part of the 50S ribosomal subunit. Contacts protein L32.

The chain is Large ribosomal subunit protein bL17 from Clostridium acetobutylicum (strain ATCC 824 / DSM 792 / JCM 1419 / IAM 19013 / LMG 5710 / NBRC 13948 / NRRL B-527 / VKM B-1787 / 2291 / W).